Here is an 883-residue protein sequence, read N- to C-terminus: Phosphoenolpyruvate carboxylase (883 aa).

Active-site residues include His-138 and Lys-546.

The protein belongs to the PEPCase type 1 family. Requires Mg(2+) as cofactor.

It carries out the reaction oxaloacetate + phosphate = phosphoenolpyruvate + hydrogencarbonate. In terms of biological role, forms oxaloacetate, a four-carbon dicarboxylic acid source for the tricarboxylic acid cycle. This is Phosphoenolpyruvate carboxylase from Salmonella arizonae (strain ATCC BAA-731 / CDC346-86 / RSK2980).